A 225-amino-acid polypeptide reads, in one-letter code: Enolase-phosphatase E1 (225 aa).

It belongs to the HAD-like hydrolase superfamily. MasA/MtnC family. In terms of assembly, monomer. It depends on Mg(2+) as a cofactor.

The catalysed reaction is 5-methylsulfanyl-2,3-dioxopentyl phosphate + H2O = 1,2-dihydroxy-5-(methylsulfanyl)pent-1-en-3-one + phosphate. Its pathway is amino-acid biosynthesis; L-methionine biosynthesis via salvage pathway; L-methionine from S-methyl-5-thio-alpha-D-ribose 1-phosphate: step 3/6. It participates in amino-acid biosynthesis; L-methionine biosynthesis via salvage pathway; L-methionine from S-methyl-5-thio-alpha-D-ribose 1-phosphate: step 4/6. In terms of biological role, bifunctional enzyme that catalyzes the enolization of 2,3-diketo-5-methylthiopentyl-1-phosphate (DK-MTP-1-P) into the intermediate 2-hydroxy-3-keto-5-methylthiopentenyl-1-phosphate (HK-MTPenyl-1-P), which is then dephosphorylated to form the acireductone 1,2-dihydroxy-3-keto-5-methylthiopentene (DHK-MTPene). This is Enolase-phosphatase E1 from Shewanella piezotolerans (strain WP3 / JCM 13877).